Here is a 274-residue protein sequence, read N- to C-terminus: Large ribosomal subunit protein uL2cy (274 aa).

Disordered stretches follow at residues 1 to 20 (MAIH…AVDS) and 224 to 274 (NPVD…RRSK).

The protein belongs to the universal ribosomal protein uL2 family. Part of the 50S ribosomal subunit.

It is found in the plastid. Its subcellular location is the chloroplast. This Populus alba (White poplar) protein is Large ribosomal subunit protein uL2cy (rpl2-B).